The following is a 208-amino-acid chain: Small ribosomal subunit protein uS2 (208 aa).

Belongs to the universal ribosomal protein uS2 family.

The chain is Small ribosomal subunit protein uS2 from Cenarchaeum symbiosum (strain A).